Consider the following 521-residue polypeptide: Tubulin-specific chaperone E (521 aa).

The CAP-Gly domain maps to 24-68 (GPVPPTAGVWLGVEWDHPERGKHDGSHDGVRYFTCRHPTGGSFVR). 7 LRR repeats span residues 147–168 (FVQSLDLSGNLLSSWEVLAAIT), 173–194 (SLQELHLSHNRLSISSAPSSLS), 199–220 (HLRVLSINSCALTWTQVLHCAP), 224–245 (QVEELYLADNNITELLRPEHVL), 247–268 (ALTVLDLSNNQIAQETVLEISH), 271–292 (RLERLNLSSTSLSEIKFSDVPA), and 301–322 (ALKELLLDDNNISEWRVVNELE). In terms of domain architecture, LRRCT spans 335-377 (NPLLHKEKNLETARQIMIARLGQLELLDMRQILSDERRGAELD).

The protein belongs to the TBCE family. In terms of assembly, supercomplex made of cofactors A to E. Cofactors A and D function by capturing and stabilizing tubulin in a quasi-native conformation. Cofactor E binds to the cofactor D-tubulin complex; interaction with cofactor C then causes the release of tubulin polypeptides that are committed to the native state.

The protein resides in the cytoplasm. The protein localises to the cytoskeleton. Tubulin-folding protein; involved in the second step of the tubulin folding pathway. This Danio rerio (Zebrafish) protein is Tubulin-specific chaperone E (tbce).